A 65-amino-acid chain; its full sequence is Large ribosomal subunit protein bL35 (65 aa).

Belongs to the bacterial ribosomal protein bL35 family.

The polypeptide is Large ribosomal subunit protein bL35 (Thermoanaerobacter sp. (strain X514)).